The following is a 387-amino-acid chain: Acetylserotonin O-methyltransferase (387 aa).

S-adenosyl-L-methionine is bound by residues Tyr153, Trp170, Glu216, 246 to 248, and Arg263; that span reads GDF. His266 (proton donor/acceptor) is an active-site residue. Asp267 and Gln317 together coordinate substrate. The disordered stretch occupies residues 354–387; the sequence is AARGGGAGARSDGGGGDATSQTGSGTGSEVGAQD. Positions 356–370 are enriched in gly residues; the sequence is RGGGAGARSDGGGGD.

The protein belongs to the class I-like SAM-binding methyltransferase superfamily. Cation-independent O-methyltransferase family. Homodimer. Expressed predominantly in the pineal gland (at protein level). Very low expression, if any, in the retina.

It carries out the reaction N-acetylserotonin + S-adenosyl-L-methionine = melatonin + S-adenosyl-L-homocysteine + H(+). It participates in aromatic compound metabolism; melatonin biosynthesis; melatonin from serotonin: step 1/2. Its function is as follows. Catalyzes the transfer of a methyl group onto N-acetylserotonin, producing melatonin (N-acetyl-5-methoxytryptamine). The polypeptide is Acetylserotonin O-methyltransferase (Asmt) (Mus musculus (Mouse)).